Reading from the N-terminus, the 218-residue chain is Radial spoke head 1 homolog (218 aa).

Residues Met-1–Gln-13 show a composition bias toward acidic residues. Residues Met-1 to Glu-48 form a disordered region. MORN repeat units lie at residues Tyr-19–Thr-42, Tyr-43–Arg-65, Tyr-66–Lys-88, Tyr-89–Thr-111, Tyr-112–Ser-134, and Tyr-158–Glu-180. A compositionally biased stretch (basic and acidic residues) spans Glu-20 to Gly-31.

In terms of assembly, component of the axonemal radial spoke complexes. Interacts with septin SEPT7. As to expression, testis-specific.

It is found in the cytoplasm. Its subcellular location is the cytoskeleton. The protein localises to the cilium axoneme. The protein resides in the flagellum basal body. It localises to the flagellum axoneme. Its function is as follows. Functions as part of axonemal radial spoke complexes that play an important part in the motility of sperm and cilia. The polypeptide is Radial spoke head 1 homolog (rsph1) (Cyprinus carpio (Common carp)).